A 182-amino-acid polypeptide reads, in one-letter code: Large ribosomal subunit protein uL5 (182 aa).

The protein belongs to the universal ribosomal protein uL5 family. As to quaternary structure, part of the 50S ribosomal subunit; part of the 5S rRNA/L5/L18/L25 subcomplex. Contacts the 5S rRNA and the P site tRNA. Forms a bridge to the 30S subunit in the 70S ribosome.

Its function is as follows. This is one of the proteins that bind and probably mediate the attachment of the 5S RNA into the large ribosomal subunit, where it forms part of the central protuberance. In the 70S ribosome it contacts protein S13 of the 30S subunit (bridge B1b), connecting the 2 subunits; this bridge is implicated in subunit movement. Contacts the P site tRNA; the 5S rRNA and some of its associated proteins might help stabilize positioning of ribosome-bound tRNAs. The sequence is that of Large ribosomal subunit protein uL5 from Nostoc punctiforme (strain ATCC 29133 / PCC 73102).